A 149-amino-acid chain; its full sequence is Ribonuclease pancreatic (149 aa).

An N-terminal signal peptide occupies residues 1-25 (MGLEKSLILFPLFVLLLGWVQPSLG). A disordered region spans residues 30–49 (AQKFERQHMDSSGSSNNSPT). K32 and R35 together coordinate substrate. The active-site Proton acceptor is the H37. Polar residues predominate over residues 39 to 49 (DSSGSSNNSPT). 4 disulfides stabilise this stretch: C51–C109, C65–C120, C83–C135, and C90–C97. Residue 66–70 (KPVNT) coordinates substrate. A glycan (N-linked (GlcNAc...) asparagine) is linked at N87. K91 is a binding site for substrate. The active-site Proton donor is the H144.

It belongs to the pancreatic ribonuclease family. In terms of assembly, monomer. Interacts with and forms tight 1:1 complexes with RNH1. Dimerization of two such complexes may occur. Interaction with RNH1 inhibits this protein. As to expression, pancreas.

It localises to the secreted. It carries out the reaction an [RNA] containing cytidine + H2O = an [RNA]-3'-cytidine-3'-phosphate + a 5'-hydroxy-ribonucleotide-3'-[RNA].. It catalyses the reaction an [RNA] containing uridine + H2O = an [RNA]-3'-uridine-3'-phosphate + a 5'-hydroxy-ribonucleotide-3'-[RNA].. Its function is as follows. Endonuclease that catalyzes the cleavage of RNA on the 3' side of pyrimidine nucleotides. Acts on single-stranded and double-stranded RNA. This Mus pahari (Gairdner's shrew-mouse) protein is Ribonuclease pancreatic (Rnase1).